Reading from the N-terminus, the 468-residue chain is ATP synthase subunit beta (468 aa).

148–155 (GGAGVGKT) provides a ligand contact to ATP.

It belongs to the ATPase alpha/beta chains family. F-type ATPases have 2 components, CF(1) - the catalytic core - and CF(0) - the membrane proton channel. CF(1) has five subunits: alpha(3), beta(3), gamma(1), delta(1), epsilon(1). CF(0) has three main subunits: a(1), b(2) and c(9-12). The alpha and beta chains form an alternating ring which encloses part of the gamma chain. CF(1) is attached to CF(0) by a central stalk formed by the gamma and epsilon chains, while a peripheral stalk is formed by the delta and b chains.

The protein resides in the cell inner membrane. It catalyses the reaction ATP + H2O + 4 H(+)(in) = ADP + phosphate + 5 H(+)(out). Produces ATP from ADP in the presence of a proton gradient across the membrane. The catalytic sites are hosted primarily by the beta subunits. This chain is ATP synthase subunit beta, found in Xanthomonas campestris pv. campestris (strain 8004).